The chain runs to 280 residues: Pantothenate synthetase (280 aa).

31–38 (MGNLHAGH) provides a ligand contact to ATP. The active-site Proton donor is the histidine 38. (R)-pantoate is bound at residue glutamine 62. Glutamine 62 contributes to the beta-alanine binding site. 150 to 153 (GKKD) contacts ATP. Glutamine 156 is a (R)-pantoate binding site. ATP-binding positions include valine 179 and 187 to 190 (MSSR).

It belongs to the pantothenate synthetase family. As to quaternary structure, homodimer.

Its subcellular location is the cytoplasm. It carries out the reaction (R)-pantoate + beta-alanine + ATP = (R)-pantothenate + AMP + diphosphate + H(+). Its pathway is cofactor biosynthesis; (R)-pantothenate biosynthesis; (R)-pantothenate from (R)-pantoate and beta-alanine: step 1/1. Catalyzes the condensation of pantoate with beta-alanine in an ATP-dependent reaction via a pantoyl-adenylate intermediate. This Xanthomonas axonopodis pv. citri (strain 306) protein is Pantothenate synthetase.